A 156-amino-acid polypeptide reads, in one-letter code: SsrA-binding protein (156 aa).

This sequence belongs to the SmpB family.

The protein resides in the cytoplasm. Its function is as follows. Required for rescue of stalled ribosomes mediated by trans-translation. Binds to transfer-messenger RNA (tmRNA), required for stable association of tmRNA with ribosomes. tmRNA and SmpB together mimic tRNA shape, replacing the anticodon stem-loop with SmpB. tmRNA is encoded by the ssrA gene; the 2 termini fold to resemble tRNA(Ala) and it encodes a 'tag peptide', a short internal open reading frame. During trans-translation Ala-aminoacylated tmRNA acts like a tRNA, entering the A-site of stalled ribosomes, displacing the stalled mRNA. The ribosome then switches to translate the ORF on the tmRNA; the nascent peptide is terminated with the 'tag peptide' encoded by the tmRNA and targeted for degradation. The ribosome is freed to recommence translation, which seems to be the essential function of trans-translation. This chain is SsrA-binding protein, found in Clostridium botulinum (strain Loch Maree / Type A3).